Reading from the N-terminus, the 255-residue chain is Type III pantothenate kinase (255 aa).

6–13 (DVGNTNIV) is a binding site for ATP. Substrate-binding positions include tyrosine 100 and 107–110 (GADR). Aspartate 109 acts as the Proton acceptor in catalysis. A K(+)-binding site is contributed by aspartate 129. An ATP-binding site is contributed by threonine 132. Threonine 184 is a substrate binding site.

Belongs to the type III pantothenate kinase family. Homodimer. Requires NH4(+) as cofactor. K(+) serves as cofactor.

The protein resides in the cytoplasm. It carries out the reaction (R)-pantothenate + ATP = (R)-4'-phosphopantothenate + ADP + H(+). It participates in cofactor biosynthesis; coenzyme A biosynthesis; CoA from (R)-pantothenate: step 1/5. Its function is as follows. Catalyzes the phosphorylation of pantothenate (Pan), the first step in CoA biosynthesis. The sequence is that of Type III pantothenate kinase from Geobacter sulfurreducens (strain ATCC 51573 / DSM 12127 / PCA).